A 431-amino-acid polypeptide reads, in one-letter code: Leucine carboxyl methyltransferase 1 (431 aa).

S-adenosyl-L-methionine contacts are provided by residues R103, G131, D159, and 219–220 (DL). Positions 228-268 (QPQQPLPPGVPIGSRGLHASPFTPGSTTQHEEQTEETSLPQ) are disordered. S-adenosyl-L-methionine is bound at residue E289.

The protein belongs to the methyltransferase superfamily. LCMT family.

The catalysed reaction is [phosphatase 2A protein]-C-terminal L-leucine + S-adenosyl-L-methionine = [phosphatase 2A protein]-C-terminal L-leucine methyl ester + S-adenosyl-L-homocysteine. In terms of biological role, methylates the carboxyl group of the C-terminal leucine residue of protein phosphatase 2A catalytic subunits to form alpha-leucine ester residues. The sequence is that of Leucine carboxyl methyltransferase 1 (ppm-1) from Neurospora crassa (strain ATCC 24698 / 74-OR23-1A / CBS 708.71 / DSM 1257 / FGSC 987).